The following is a 303-amino-acid chain: Phospholipase A1 2 (303 aa).

Cys6 and Cys90 are joined by a disulfide. Ser140 serves as the catalytic Nucleophile. Asp168 functions as the Charge relay system in the catalytic mechanism. A disulfide bridge links Cys179 with Cys184. The active-site Charge relay system is His232. Cystine bridges form between Cys247–Cys271, Cys248–Cys296, and Cys264–Cys269.

The protein belongs to the AB hydrolase superfamily. Lipase family. In terms of tissue distribution, expressed by the venom gland.

Its subcellular location is the secreted. It carries out the reaction a 1,2-diacyl-sn-glycero-3-phosphocholine + H2O = a 2-acyl-sn-glycero-3-phosphocholine + a fatty acid + H(+). Its function is as follows. Catalyzes the hydrolysis of phosphatidylcholine with phospholipase A1 activity. May act as an allergen and induce hemolytic activity. This chain is Phospholipase A1 2, found in Dolichovespula maculata (Bald-faced hornet).